The sequence spans 395 residues: E3 ubiquitin-protein ligase RNFT1 (395 aa).

Disordered stretches follow at residues 1–58 and 78–97; these read MQAS…SSRN and YSHS…GEHG. The next 6 helical transmembrane spans lie at 118-138, 165-185, 193-213, 216-236, 258-278, and 283-303; these read ILIL…LGIG, CAWL…TFHS, IFLN…IVGI, FILK…PSFI, IFVP…FGNV, and LGIL…FGHL. A required for ubiquitin ligase activity and for protection against ER stress-induced cell death region spans residues 328-379; it reads CSDMDGICTICQAEFQKPVLLFCQHIFCEECITLWFNREKTCPLCRTVISEC. Residues 335–373 form an RING-type zinc finger; the sequence is CTICQAEFQKPVLLFCQHIFCEECITLWFNREKTCPLCR.

Predominantly expressed in testis.

It localises to the early endosome membrane. The enzyme catalyses S-ubiquitinyl-[E2 ubiquitin-conjugating enzyme]-L-cysteine + [acceptor protein]-L-lysine = [E2 ubiquitin-conjugating enzyme]-L-cysteine + N(6)-ubiquitinyl-[acceptor protein]-L-lysine.. It participates in protein modification; protein ubiquitination. In terms of biological role, E3 ubiquitin-protein ligase that acts in the endoplasmic reticulum (ER)-associated degradation (ERAD) pathway, which targets misfolded proteins that accumulate in the endoplasmic reticulum (ER) for ubiquitination and subsequent proteasome-mediated degradation. Protects cells from ER stress-induced apoptosis. The polypeptide is E3 ubiquitin-protein ligase RNFT1 (Rnft1) (Mus musculus (Mouse)).